Here is a 414-residue protein sequence, read N- to C-terminus: Serine/threonine transporter SstT (414 aa).

Transmembrane regions (helical) follow at residues 16-36 (GSLV…AWIS), 46-66 (LGTL…LMLV), 84-104 (ILFL…VFSF), 143-163 (ALLN…GFAL), 180-200 (AVTF…FGLV), 219-239 (LVVL…LLVF), 300-320 (MAGA…TLGV), and 332-352 (VVAS…LLLI).

It belongs to the dicarboxylate/amino acid:cation symporter (DAACS) (TC 2.A.23) family.

The protein resides in the cell inner membrane. It catalyses the reaction L-serine(in) + Na(+)(in) = L-serine(out) + Na(+)(out). The enzyme catalyses L-threonine(in) + Na(+)(in) = L-threonine(out) + Na(+)(out). Involved in the import of serine and threonine into the cell, with the concomitant import of sodium (symport system). The protein is Serine/threonine transporter SstT of Salmonella newport (strain SL254).